The following is a 327-amino-acid chain: Lipid phosphate phosphatase 1 (327 aa).

6 helical membrane-spanning segments follow: residues 51–71 (WIIL…SPFY), 93–113 (IWSV…CFYL), 118–138 (VYDL…TGVI), 187–207 (FPSG…LYLS), 217–237 (GHVA…LVGI), and 244–264 (WHHW…AAFC).

This sequence belongs to the PA-phosphatase related phosphoesterase family. In terms of tissue distribution, strongly expressed in leaves, moderately in roots, weakly in floral hamps and flower buds, and not detected in adult flowers and seedpods.

Its subcellular location is the membrane. With respect to regulation, PA phosphatase activity inhibited by N-ethylmaleimide with an IC(50) value of 10 mM. Its function is as follows. Plays a general role in cellular responses to stress, may be by attenuating the signal produced by phospholipases. Exhibits both diacylglycerol pyrophosphate (DGPP) phosphatase and phosphatidate (PA) phosphatase activities. Substrate preference is diacylglycerol pyrophosphate &gt; phosphatidate. The polypeptide is Lipid phosphate phosphatase 1 (LPP1) (Arabidopsis thaliana (Mouse-ear cress)).